We begin with the raw amino-acid sequence, 575 residues long: uncharacterized protein (575 aa).

Transmembrane regions (helical) follow at residues 16–36 (FFLD…FPLI), 50–70 (WGLI…SSAL), 132–152 (PEDL…MLFI), 154–174 (WQLA…ALYF), 243–263 (ISYM…TWFV), and 264–284 (IRGS…NVLF). The region spanning 16–299 (FFLDFFSAIA…INAIIEMYPR (284 aa)) is the ABC transmembrane type-1 domain. The ABC transporter domain occupies 333 to 567 (IRYKHVSFGY…GGLYSRLHQA (235 aa)). 366–373 (GPSGAGKS) is an ATP binding site.

Belongs to the ABC transporter superfamily.

The protein localises to the cell membrane. It localises to the membrane raft. This is an uncharacterized protein from Bacillus subtilis (strain 168).